Here is a 253-residue protein sequence, read N- to C-terminus: 5'/3'-nucleotidase SurE (253 aa).

Positions 8, 9, 39, and 92 each coordinate a divalent metal cation.

The protein belongs to the SurE nucleotidase family. A divalent metal cation is required as a cofactor.

It localises to the cytoplasm. The catalysed reaction is a ribonucleoside 5'-phosphate + H2O = a ribonucleoside + phosphate. It carries out the reaction a ribonucleoside 3'-phosphate + H2O = a ribonucleoside + phosphate. It catalyses the reaction [phosphate](n) + H2O = [phosphate](n-1) + phosphate + H(+). In terms of biological role, nucleotidase with a broad substrate specificity as it can dephosphorylate various ribo- and deoxyribonucleoside 5'-monophosphates and ribonucleoside 3'-monophosphates with highest affinity to 3'-AMP. Also hydrolyzes polyphosphate (exopolyphosphatase activity) with the preference for short-chain-length substrates (P20-25). Might be involved in the regulation of dNTP and NTP pools, and in the turnover of 3'-mononucleotides produced by numerous intracellular RNases (T1, T2, and F) during the degradation of various RNAs. This chain is 5'/3'-nucleotidase SurE, found in Shigella dysenteriae serotype 1 (strain Sd197).